Reading from the N-terminus, the 337-residue chain is Probable dihydroorotase (337 aa).

Residues His-12, His-14, Lys-95, His-132, His-170, and Asp-240 each contribute to the Zn(2+) site. N6-carboxylysine is present on Lys-95.

The protein belongs to the metallo-dependent hydrolases superfamily. DHOase family. Class II DHOase subfamily. Requires Zn(2+) as cofactor.

It carries out the reaction (S)-dihydroorotate + H2O = N-carbamoyl-L-aspartate + H(+). It participates in pyrimidine metabolism; UMP biosynthesis via de novo pathway; (S)-dihydroorotate from bicarbonate: step 3/3. The protein is Probable dihydroorotase (ura2) of Schizosaccharomyces pombe (strain 972 / ATCC 24843) (Fission yeast).